The chain runs to 176 residues: Macro domain-containing protein LMOf2365_2748 (176 aa).

Residues 1 to 175 (MEITVVKGDI…LYNKLINSEV (175 aa)) form the Macro domain.

Belongs to the MacroD-type family.

In Listeria monocytogenes serotype 4b (strain F2365), this protein is Macro domain-containing protein LMOf2365_2748.